Consider the following 513-residue polypeptide: ATP synthase subunit alpha (513 aa).

169-176 (GDRQTGKT) contributes to the ATP binding site.

This sequence belongs to the ATPase alpha/beta chains family. F-type ATPases have 2 components, CF(1) - the catalytic core - and CF(0) - the membrane proton channel. CF(1) has five subunits: alpha(3), beta(3), gamma(1), delta(1), epsilon(1). CF(0) has three main subunits: a(1), b(2) and c(9-12). The alpha and beta chains form an alternating ring which encloses part of the gamma chain. CF(1) is attached to CF(0) by a central stalk formed by the gamma and epsilon chains, while a peripheral stalk is formed by the delta and b chains.

Its subcellular location is the cell inner membrane. The enzyme catalyses ATP + H2O + 4 H(+)(in) = ADP + phosphate + 5 H(+)(out). Its function is as follows. Produces ATP from ADP in the presence of a proton gradient across the membrane. The alpha chain is a regulatory subunit. This Shewanella sp. (strain MR-4) protein is ATP synthase subunit alpha.